Here is a 570-residue protein sequence, read N- to C-terminus: Sulfite reductase [NADPH] hemoprotein beta-component (570 aa).

The [4Fe-4S] cluster site is built by C434, C440, C479, and C483. C483 contacts siroheme.

It belongs to the nitrite and sulfite reductase 4Fe-4S domain family. In terms of assembly, alpha(8)-beta(8). The alpha component is a flavoprotein, the beta component is a hemoprotein. Requires siroheme as cofactor. It depends on [4Fe-4S] cluster as a cofactor.

It carries out the reaction hydrogen sulfide + 3 NADP(+) + 3 H2O = sulfite + 3 NADPH + 4 H(+). It participates in sulfur metabolism; hydrogen sulfide biosynthesis; hydrogen sulfide from sulfite (NADPH route): step 1/1. Functionally, component of the sulfite reductase complex that catalyzes the 6-electron reduction of sulfite to sulfide. This is one of several activities required for the biosynthesis of L-cysteine from sulfate. In Escherichia coli O17:K52:H18 (strain UMN026 / ExPEC), this protein is Sulfite reductase [NADPH] hemoprotein beta-component.